Consider the following 471-residue polypeptide: UDP-N-acetylmuramate--L-alanine ligase (471 aa).

Position 114–120 (114–120 (GTHGKTT)) interacts with ATP.

The protein belongs to the MurCDEF family.

The protein localises to the cytoplasm. It catalyses the reaction UDP-N-acetyl-alpha-D-muramate + L-alanine + ATP = UDP-N-acetyl-alpha-D-muramoyl-L-alanine + ADP + phosphate + H(+). The protein operates within cell wall biogenesis; peptidoglycan biosynthesis. Functionally, cell wall formation. This is UDP-N-acetylmuramate--L-alanine ligase from Rhizobium johnstonii (strain DSM 114642 / LMG 32736 / 3841) (Rhizobium leguminosarum bv. viciae).